A 59-amino-acid chain; its full sequence is Large ribosomal subunit protein bL32 (59 aa).

Positions 1 to 20 are disordered; it reads MAVQKNKPTRSKRGMRRSHD. Residues 7 to 19 are compositionally biased toward basic residues; it reads KPTRSKRGMRRSH.

It belongs to the bacterial ribosomal protein bL32 family.

The sequence is that of Large ribosomal subunit protein bL32 from Wigglesworthia glossinidia brevipalpis.